Consider the following 170-residue polypeptide: Acetyl-CoA decarbonylase/synthase complex subunit epsilon 1 (170 aa).

It belongs to the CdhB family. In terms of assembly, heterotetramer of two alpha and two epsilon subunits. The ACDS complex is made up of alpha, epsilon, beta, gamma and delta subunits with a probable stoichiometry of (alpha(2)epsilon(2))(4)-beta(8)-(gamma(1)delta(1))(8).

It participates in one-carbon metabolism; methanogenesis from acetate. In terms of biological role, part of a complex that catalyzes the reversible cleavage of acetyl-CoA, allowing growth on acetate as sole source of carbon and energy. The alpha-epsilon subcomponent functions as a carbon monoxide dehydrogenase. The precise role of the epsilon subunit is unclear; it may have a stabilizing role within the alpha(2)epsilon(2) component and/or be involved in electron transfer to FAD during a potential FAD-mediated CO oxidation. This is Acetyl-CoA decarbonylase/synthase complex subunit epsilon 1 (cdhB1) from Methanosarcina mazei (strain ATCC BAA-159 / DSM 3647 / Goe1 / Go1 / JCM 11833 / OCM 88) (Methanosarcina frisia).